Reading from the N-terminus, the 776-residue chain is MSEAVRVPSPATPLVVAAPAPEERKGKESEREKLPPIVSAGAGATAGLDRGAKGQISTFSSFISAVSPKKEAAENRSSPAHLVFPNIKNVREPPPICLDVRQKQRTSMDASSSEMKAPVLPEPILPIQPKTVKDFQEDVEKVKSSGDWKAVHDFYLTTFDSFPELNAAFKKDATASFNTIEDSGINAKFVNAVYDTLLNTPQDVQKTVLKGIINSLLREWKGPRTKDDLRAYFILLQNPQFNNTSTYVIYAHLLRQIATLVEADHHFLVHWFKKLSQKRFKQLVERLLQFISLRLFPAKPEEFPPITKCSWWIPSAAKVLALLNTANNLVHPPLIPYTDFYNSTLDHIDLMEEYHTWQNFGNSHRFSFCQYPFVISVAAKKIIIQRDSEQQMINIARQSLVDKVSRRQRPDMNILFLNMKVRRTHLVSDSLDELTRKRADLKKKLKVTFVGEAGLDMGGLTKEWFLLLIRQIFHPDYGMFTYHKDSHCHWFSSFKCDNYSEFRLVGILMGLAVYNSITLDIRFPPCCYKKLLSPPIIPSDQNIPVGICNVTVDDLCQIMPELAHGLSELLSHEGNVEEDFYSTFQVFQEEFGIIKSYNLKPGGDKISVTNQNRKEYVQLYTDFLLNKSIYKQFAAFYYGFHSVCASNALMLLRPEEVEILVCGSPDLDMHALQRSTQYDGYAKTDLTIKYFWDVVLGFPLDLQKKLLHFTTGSDRVPVGGMADLNFKISKNETSTNCLPVAHTCFNQLCLPPYKSKKDLKQKLIIGISNSEGFGLE.

Residues 1–46 (MSEAVRVPSPATPLVVAAPAPEERKGKESEREKLPPIVSAGAGATA) form a disordered region. The segment covering 7 to 20 (VPSPATPLVVAAPA) has biased composition (low complexity). S9 carries the phosphoserine modification. Residues 21–34 (PEERKGKESEREKL) are compositionally biased toward basic and acidic residues. The HECT domain maps to 437–776 (KRADLKKKLK…ISNSEGFGLE (340 aa)). Catalysis depends on C744, which acts as the Glycyl thioester intermediate.

It catalyses the reaction S-ubiquitinyl-[E2 ubiquitin-conjugating enzyme]-L-cysteine + [acceptor protein]-L-lysine = [E2 ubiquitin-conjugating enzyme]-L-cysteine + N(6)-ubiquitinyl-[acceptor protein]-L-lysine.. It participates in protein modification; protein ubiquitination. Its function is as follows. E3 ubiquitin-protein ligase which accepts ubiquitin from an E2 ubiquitin-conjugating enzyme in the form of a thioester and then directly transfers the ubiquitin to targeted substrates. Functionally, (Microbial infection) Catalyzes ubiquitination of Botulinum neurotoxin A light chain (LC) of C.botulinum neurotoxin type A (BoNT/A). This Homo sapiens (Human) protein is Probable E3 ubiquitin-protein ligase HECTD2.